The primary structure comprises 90 residues: uncharacterized protein (90 aa).

This is an uncharacterized protein from Mycoplasma genitalium (strain ATCC 33530 / DSM 19775 / NCTC 10195 / G37) (Mycoplasmoides genitalium).